The following is a 336-amino-acid chain: Serpentine receptor class gamma-9 (336 aa).

7 helical membrane-spanning segments follow: residues 30–50 (LLQA…LYVI), 64–84 (FVIY…DIFI), 111–131 (IYYP…IFLT), 152–172 (LSFI…NTII), 200–220 (FLFL…VIMF), 237–257 (LCLA…FEAL), and 271–291 (FLIQ…IMIF).

This sequence belongs to the nematode receptor-like protein srg family.

The protein localises to the membrane. The polypeptide is Serpentine receptor class gamma-9 (srg-9) (Caenorhabditis elegans).